A 133-amino-acid chain; its full sequence is NADPH-dependent 7-cyano-7-deazaguanine reductase (133 aa).

The Thioimide intermediate role is filled by Cys49. The active-site Proton donor is Asp56. Residues Ile71–Leu73 and His90–Glu91 contribute to the substrate site.

Belongs to the GTP cyclohydrolase I family. QueF type 1 subfamily.

The protein localises to the cytoplasm. The enzyme catalyses 7-aminomethyl-7-carbaguanine + 2 NADP(+) = 7-cyano-7-deazaguanine + 2 NADPH + 3 H(+). It participates in tRNA modification; tRNA-queuosine biosynthesis. Catalyzes the NADPH-dependent reduction of 7-cyano-7-deazaguanine (preQ0) to 7-aminomethyl-7-deazaguanine (preQ1). This is NADPH-dependent 7-cyano-7-deazaguanine reductase from Leptospira interrogans serogroup Icterohaemorrhagiae serovar copenhageni (strain Fiocruz L1-130).